The chain runs to 64 residues: Alpha-mammal toxin Lqh2 (64 aa).

An LCN-type CS-alpha/beta domain is found at 2–64 (KDGYIVDDVN…VRTKGPGRCR (63 aa)). 4 disulfides stabilise this stretch: C12/C63, C16/C36, C22/C46, and C26/C48. R64 is modified (arginine amide).

It belongs to the long (4 C-C) scorpion toxin superfamily. Sodium channel inhibitor family. Alpha subfamily. In terms of tissue distribution, expressed by the venom gland.

The protein resides in the secreted. Its function is as follows. Alpha toxins bind voltage-independently at site-3 of sodium channels (Nav) and inhibit the inactivation of the activated channels, thereby blocking neuronal transmission. The dissociation is voltage-dependent. Is active on mammals and competes for alpha-toxins binding on both mammalian and cockroach sodium channels. The chain is Alpha-mammal toxin Lqh2 from Leiurus hebraeus (Hebrew deathstalker scorpion).